We begin with the raw amino-acid sequence, 165 residues long: 6,7-dimethyl-8-ribityllumazine synthase (165 aa).

Residues Phe24, 62–64 (AFE), and 86–88 (AVI) contribute to the 5-amino-6-(D-ribitylamino)uracil site. 91–92 (DT) is a (2S)-2-hydroxy-3-oxobutyl phosphate binding site. The active-site Proton donor is His94. Position 119 (Phe119) interacts with 5-amino-6-(D-ribitylamino)uracil. Arg133 provides a ligand contact to (2S)-2-hydroxy-3-oxobutyl phosphate.

It belongs to the DMRL synthase family.

It carries out the reaction (2S)-2-hydroxy-3-oxobutyl phosphate + 5-amino-6-(D-ribitylamino)uracil = 6,7-dimethyl-8-(1-D-ribityl)lumazine + phosphate + 2 H2O + H(+). It functions in the pathway cofactor biosynthesis; riboflavin biosynthesis; riboflavin from 2-hydroxy-3-oxobutyl phosphate and 5-amino-6-(D-ribitylamino)uracil: step 1/2. Functionally, catalyzes the formation of 6,7-dimethyl-8-ribityllumazine by condensation of 5-amino-6-(D-ribitylamino)uracil with 3,4-dihydroxy-2-butanone 4-phosphate. This is the penultimate step in the biosynthesis of riboflavin. The sequence is that of 6,7-dimethyl-8-ribityllumazine synthase from Prochlorococcus marinus (strain MIT 9313).